Reading from the N-terminus, the 565-residue chain is Oxygen-dependent choline dehydrogenase (565 aa).

7–36 (DYIICGAGSAGNVLATRLTEDPDVTVLLLE) is an FAD binding site. Catalysis depends on histidine 474, which acts as the Proton acceptor.

Belongs to the GMC oxidoreductase family. FAD serves as cofactor.

It catalyses the reaction choline + A = betaine aldehyde + AH2. The catalysed reaction is betaine aldehyde + NAD(+) + H2O = glycine betaine + NADH + 2 H(+). It functions in the pathway amine and polyamine biosynthesis; betaine biosynthesis via choline pathway; betaine aldehyde from choline (cytochrome c reductase route): step 1/1. Involved in the biosynthesis of the osmoprotectant glycine betaine. Catalyzes the oxidation of choline to betaine aldehyde and betaine aldehyde to glycine betaine at the same rate. The chain is Oxygen-dependent choline dehydrogenase from Burkholderia thailandensis (strain ATCC 700388 / DSM 13276 / CCUG 48851 / CIP 106301 / E264).